The chain runs to 392 residues: tRNA (guanine-N(7)-)-methyltransferase (392 aa).

Residues E123, E148, and D175 each coordinate S-adenosyl-L-methionine. Residues K201 and D231 each contribute to the substrate site.

Belongs to the class I-like SAM-binding methyltransferase superfamily. TrmB family.

The catalysed reaction is guanosine(46) in tRNA + S-adenosyl-L-methionine = N(7)-methylguanosine(46) in tRNA + S-adenosyl-L-homocysteine. It functions in the pathway tRNA modification; N(7)-methylguanine-tRNA biosynthesis. Its function is as follows. Catalyzes the formation of N(7)-methylguanine at position 46 (m7G46) in tRNA. This Campylobacter jejuni subsp. jejuni serotype O:6 (strain 81116 / NCTC 11828) protein is tRNA (guanine-N(7)-)-methyltransferase.